Consider the following 309-residue polypeptide: MGSFDRQRAVPKFKTATPSPLPLSPSPYFTMPPGLTPADFLDSPLLFTSSNILPSPTTGTFPAQSLNYNNNGLLIDKNEIKYEDTTPPLFLPSMVTQPLPQLDLFKSEIMSSNKTSDDGYNWRKYGQKQVKGSENPRSYFKCTYPNCLTKKKVETSLVKGQMIEIVYKGSHNHPKPQSTKRSSSTAIAAHQNSSNGDGKDIGEDETEAKRWKREENVKEPRVVVQTTSDIDILDDGYRWRKYGQKVVKGNPNPRSYYKCTFTGCFVRKHVERAFQDPKSVITTYEGKHKHQIPTPRRGPVLRLLGKTET.

The segment at 1–24 is disordered; sequence MGSFDRQRAVPKFKTATPSPLPLS. Residues 111–176 constitute a DNA-binding region (WRKY 1); sequence SSNKTSDDGY…YKGSHNHPKP (66 aa). Residues C142, C147, H171, and H173 each contribute to the Zn(2+) site. Residues 167-210 form a disordered region; that stretch reads YKGSHNHPKPQSTKRSSSTAIAAHQNSSNGDGKDIGEDETEAKR. Residues 175–196 show a composition bias toward polar residues; sequence KPQSTKRSSSTAIAAHQNSSNG. The span at 197-210 shows a compositional bias: basic and acidic residues; it reads DGKDIGEDETEAKR. Positions 228-293 form a DNA-binding region, WRKY 2; that stretch reads SDIDILDDGY…YEGKHKHQIP (66 aa). Zn(2+) is bound by residues C259, C264, H288, and H290.

The protein belongs to the WRKY group I family. In terms of assembly, interacts with VQ10.

It localises to the nucleus. In terms of biological role, transcription factor. Interacts specifically with the W box (5'-(T)TGAC[CT]-3'), a frequently occurring elicitor-responsive cis-acting element. Functions with WRKY25 and WRKY33 as positive regulator of plant thermotolerance by partially participating in ethylene-response signal transduction pathway. The protein is Probable WRKY transcription factor 26 (WRKY26) of Arabidopsis thaliana (Mouse-ear cress).